The primary structure comprises 336 residues: tRNA N6-adenosine threonylcarbamoyltransferase (336 aa).

2 residues coordinate Fe cation: histidine 111 and histidine 115. Substrate contacts are provided by residues 134–138, aspartate 167, glycine 180, aspartate 184, and asparagine 272; that span reads VVSGG. Residue aspartate 300 participates in Fe cation binding.

It belongs to the KAE1 / TsaD family. Requires Fe(2+) as cofactor.

The protein resides in the cytoplasm. It carries out the reaction L-threonylcarbamoyladenylate + adenosine(37) in tRNA = N(6)-L-threonylcarbamoyladenosine(37) in tRNA + AMP + H(+). In terms of biological role, required for the formation of a threonylcarbamoyl group on adenosine at position 37 (t(6)A37) in tRNAs that read codons beginning with adenine. Is involved in the transfer of the threonylcarbamoyl moiety of threonylcarbamoyl-AMP (TC-AMP) to the N6 group of A37, together with TsaE and TsaB. TsaD likely plays a direct catalytic role in this reaction. The chain is tRNA N6-adenosine threonylcarbamoyltransferase from Caldicellulosiruptor bescii (strain ATCC BAA-1888 / DSM 6725 / KCTC 15123 / Z-1320) (Anaerocellum thermophilum).